The sequence spans 297 residues: uncharacterized protein (297 aa).

3 disordered regions span residues 1-20, 39-100, and 174-297; these read MDTL…NADV, IEKD…ENLG, and VQKA…NEDQ. The RRM domain maps to 101–179; sequence NDLFVSGIAS…RVLNVQKAKR (79 aa). Position 184 is a phosphoserine (Ser-184). Basic and acidic residues-rich tracts occupy residues 209–223 and 233–253; these read GGYR…DSNR and PQRE…DSRP. Residues 254-263 are compositionally biased toward basic residues; sequence RRERHFHGRS. Residues 287 to 297 are compositionally biased toward polar residues; sequence SHSSVPPNEDQ.

Its subcellular location is the nucleus. This is an uncharacterized protein from Schizosaccharomyces pombe (strain 972 / ATCC 24843) (Fission yeast).